Reading from the N-terminus, the 284-residue chain is Sulfotransferase 2A6 (284 aa).

Residue 43–48 participates in 3'-phosphoadenylyl sulfate binding; it reads KSGTNW. Histidine 98 (proton acceptor) is an active-site residue. 3'-phosphoadenylyl sulfate is bound by residues arginine 120, serine 128, tyrosine 183, 217–222, and 246–248; these read SSFQVM and RNG.

This sequence belongs to the sulfotransferase 1 family. In terms of assembly, oligomer. Liver, exhibiting a sex-dependent spatial localization in the lobule of the liver.

The protein resides in the cytoplasm. It is found in the cytosol. It catalyses the reaction an alcohol + 3'-phosphoadenylyl sulfate = an alkyl sulfate + adenosine 3',5'-bisphosphate + H(+). It carries out the reaction glycolithocholate + 3'-phosphoadenylyl sulfate = sulfoglycolithocholate + adenosine 3',5'-bisphosphate + H(+). The catalysed reaction is taurolithocholate + 3'-phosphoadenylyl sulfate = taurolithocholate 3-sulfate + adenosine 3',5'-bisphosphate + H(+). The enzyme catalyses 3beta-hydroxyandrost-5-en-17-one + 3'-phosphoadenylyl sulfate = dehydroepiandrosterone 3-sulfate + adenosine 3',5'-bisphosphate + H(+). It catalyses the reaction 3beta-hydroxy-5-cholenate + 3'-phosphoadenylyl sulfate = 3beta-sulfo-5-cholenate + adenosine 3',5'-bisphosphate + H(+). It carries out the reaction deoxycholate + 3'-phosphoadenylyl sulfate = 3alpha-sulfodeoxycholate + adenosine 3',5'-bisphosphate + H(+). The catalysed reaction is glycodeoxycholate + 3'-phosphoadenylyl sulfate = 3alpha-sulfoglycodeoxycholate + adenosine 3',5'-bisphosphate + H(+). The enzyme catalyses taurodeoxycholate + 3'-phosphoadenylyl sulfate = 3alpha-sulfotaurodeoxycholate + adenosine 3',5'-bisphosphate + H(+). Its function is as follows. Sulfotransferase that utilizes 3'-phospho-5'-adenylyl sulfate (PAPS) as sulfonate donor to catalyze the sulfonation of the hydroxyl group of hydroxysteroids and bile acids. Prefered substrates are dehydroepiandrosterone (DHEA, also known as 3beta-hydroxyandrost-5-en-17-one) and 3beta-hydroxy-5-cholenoate, but can also catalyze deoxycholate and its conjugates, and lithocholate conjugates, in vitro. The chain is Sulfotransferase 2A6 from Rattus norvegicus (Rat).